Consider the following 463-residue polypeptide: 3-isopropylmalate dehydratase large subunit (463 aa).

The [4Fe-4S] cluster site is built by C347, C407, and C410.

This sequence belongs to the aconitase/IPM isomerase family. LeuC type 1 subfamily. Heterodimer of LeuC and LeuD. [4Fe-4S] cluster serves as cofactor.

The enzyme catalyses (2R,3S)-3-isopropylmalate = (2S)-2-isopropylmalate. It functions in the pathway amino-acid biosynthesis; L-leucine biosynthesis; L-leucine from 3-methyl-2-oxobutanoate: step 2/4. In terms of biological role, catalyzes the isomerization between 2-isopropylmalate and 3-isopropylmalate, via the formation of 2-isopropylmaleate. This chain is 3-isopropylmalate dehydratase large subunit, found in Buchnera aphidicola subsp. Cinara cedri (strain Cc).